The sequence spans 530 residues: UDP-N-acetylmuramoyl-L-alanyl-D-glutamate--2,6-diaminopimelate ligase (530 aa).

Residue serine 21 participates in UDP-N-acetyl-alpha-D-muramoyl-L-alanyl-D-glutamate binding. 99–105 (GTNGKSS) contributes to the ATP binding site. UDP-N-acetyl-alpha-D-muramoyl-L-alanyl-D-glutamate is bound by residues 145 to 146 (TT), serine 172, glutamine 178, and arginine 180. N6-carboxylysine is present on lysine 212. The 49-residue stretch at 221 to 269 (FKPAYREEFKGDTEHSTTAYILVREDASTGSTSKLLLEAKFGKMSTEYL) folds into the RPE1 insert domain. Meso-2,6-diaminopimelate contacts are provided by residues arginine 422, 446 to 449 (DNPR), glycine 496, and glutamate 500. The Meso-diaminopimelate recognition motif signature appears at 446-449 (DNPR).

The protein belongs to the MurCDEF family. MurE subfamily. It depends on Mg(2+) as a cofactor. In terms of processing, carboxylation is probably crucial for Mg(2+) binding and, consequently, for the gamma-phosphate positioning of ATP.

It is found in the cytoplasm. The enzyme catalyses UDP-N-acetyl-alpha-D-muramoyl-L-alanyl-D-glutamate + meso-2,6-diaminopimelate + ATP = UDP-N-acetyl-alpha-D-muramoyl-L-alanyl-gamma-D-glutamyl-meso-2,6-diaminopimelate + ADP + phosphate + H(+). The protein operates within cell wall biogenesis; peptidoglycan biosynthesis. In terms of biological role, catalyzes the addition of meso-diaminopimelic acid to the nucleotide precursor UDP-N-acetylmuramoyl-L-alanyl-D-glutamate (UMAG) in the biosynthesis of bacterial cell-wall peptidoglycan. The protein is UDP-N-acetylmuramoyl-L-alanyl-D-glutamate--2,6-diaminopimelate ligase of Rickettsia felis (strain ATCC VR-1525 / URRWXCal2) (Rickettsia azadi).